A 325-amino-acid chain; its full sequence is Tetraacyldisaccharide 4'-kinase (325 aa).

Residue 58 to 65 (TVGGSGKT) coordinates ATP.

The protein belongs to the LpxK family.

It catalyses the reaction a lipid A disaccharide + ATP = a lipid IVA + ADP + H(+). The protein operates within glycolipid biosynthesis; lipid IV(A) biosynthesis; lipid IV(A) from (3R)-3-hydroxytetradecanoyl-[acyl-carrier-protein] and UDP-N-acetyl-alpha-D-glucosamine: step 6/6. Functionally, transfers the gamma-phosphate of ATP to the 4'-position of a tetraacyldisaccharide 1-phosphate intermediate (termed DS-1-P) to form tetraacyldisaccharide 1,4'-bis-phosphate (lipid IVA). This chain is Tetraacyldisaccharide 4'-kinase, found in Coxiella burnetii (strain CbuK_Q154) (Coxiella burnetii (strain Q154)).